We begin with the raw amino-acid sequence, 348 residues long: D-erythrose-4-phosphate dehydrogenase (348 aa).

NAD(+)-binding positions include R12–I13 and R81. Substrate contacts are provided by residues S154–T156, R200, T213–K214, and R236. C155 acts as the Nucleophile in catalysis. Position 318 (N318) interacts with NAD(+).

This sequence belongs to the glyceraldehyde-3-phosphate dehydrogenase family. Epd subfamily. Homotetramer.

The protein resides in the cytoplasm. It catalyses the reaction D-erythrose 4-phosphate + NAD(+) + H2O = 4-phospho-D-erythronate + NADH + 2 H(+). It functions in the pathway cofactor biosynthesis; pyridoxine 5'-phosphate biosynthesis; pyridoxine 5'-phosphate from D-erythrose 4-phosphate: step 1/5. Functionally, catalyzes the NAD-dependent conversion of D-erythrose 4-phosphate to 4-phosphoerythronate. The chain is D-erythrose-4-phosphate dehydrogenase from Salmonella gallinarum (strain 287/91 / NCTC 13346).